Here is a 397-residue protein sequence, read N- to C-terminus: Elongation factor Tu (397 aa).

One can recognise a tr-type G domain in the interval 10 to 206; sequence KPHCNIGTIG…AVDTWIPDPQ (197 aa). The interval 19 to 26 is G1; the sequence is GHVDHGKT. 19 to 26 is a GTP binding site; the sequence is GHVDHGKT. Threonine 26 is a binding site for Mg(2+). Residues 61–65 form a G2 region; it reads GITIS. The G3 stretch occupies residues 82 to 85; that stretch reads DCPG. GTP-binding positions include 82–86 and 137–140; these read DCPGH and NKCD. A G4 region spans residues 137-140; the sequence is NKCD. Positions 175-177 are G5; sequence SAL.

This sequence belongs to the TRAFAC class translation factor GTPase superfamily. Classic translation factor GTPase family. EF-Tu/EF-1A subfamily. In terms of assembly, monomer.

The protein resides in the cytoplasm. The enzyme catalyses GTP + H2O = GDP + phosphate + H(+). GTP hydrolase that promotes the GTP-dependent binding of aminoacyl-tRNA to the A-site of ribosomes during protein biosynthesis. This is Elongation factor Tu from Lachnoclostridium phytofermentans (strain ATCC 700394 / DSM 18823 / ISDg) (Clostridium phytofermentans).